A 427-amino-acid chain; its full sequence is Trigger factor (427 aa).

A PPIase FKBP-type domain is found at 163-248; sequence GDTVVIDFVG…IHEVKAKEVP (86 aa).

The protein belongs to the FKBP-type PPIase family. Tig subfamily.

The protein localises to the cytoplasm. It carries out the reaction [protein]-peptidylproline (omega=180) = [protein]-peptidylproline (omega=0). In terms of biological role, involved in protein export. Acts as a chaperone by maintaining the newly synthesized protein in an open conformation. Functions as a peptidyl-prolyl cis-trans isomerase. In Streptococcus suis (strain 05ZYH33), this protein is Trigger factor.